Reading from the N-terminus, the 550-residue chain is Carboxypeptidase Y homolog A (550 aa).

The first 17 residues, 1–17 (MRVLSATLLAGAASAAA), serve as a signal peptide directing secretion. The propeptide occupies 18-131 (PPFQQVLGAH…RLEAYNLRAK (114 aa)). 5 cysteine pairs are disulfide-bonded: cysteine 186–cysteine 426, cysteine 320–cysteine 334, cysteine 344–cysteine 367, cysteine 351–cysteine 360, and cysteine 389–cysteine 396. Asparagine 217 is a glycosylation site (N-linked (GlcNAc...) asparagine). The active site involves serine 273. The active site involves aspartate 465. N-linked (GlcNAc...) asparagine glycosylation is present at asparagine 516. Residue histidine 527 is part of the active site.

The protein belongs to the peptidase S10 family.

Its subcellular location is the vacuole. The catalysed reaction is Release of a C-terminal amino acid with broad specificity.. Functionally, vacuolar carboxypeptidase involved in degradation of small peptides. Digests preferentially peptides containing an aliphatic or hydrophobic residue in P1' position, as well as methionine, leucine or phenylalanine in P1 position of ester substrate. In Penicillium rubens (strain ATCC 28089 / DSM 1075 / NRRL 1951 / Wisconsin 54-1255) (Penicillium chrysogenum), this protein is Carboxypeptidase Y homolog A (cpyA).